A 313-amino-acid polypeptide reads, in one-letter code: Formimidoylglutamase (313 aa).

His-130, Asp-155, His-157, Asp-159, Asp-241, and Asp-243 together coordinate Mn(2+).

It belongs to the arginase family. Mn(2+) is required as a cofactor.

It carries out the reaction N-formimidoyl-L-glutamate + H2O = formamide + L-glutamate. The protein operates within amino-acid degradation; L-histidine degradation into L-glutamate; L-glutamate from N-formimidoyl-L-glutamate (hydrolase route): step 1/1. In terms of biological role, catalyzes the conversion of N-formimidoyl-L-glutamate to L-glutamate and formamide. The sequence is that of Formimidoylglutamase from Salmonella enteritidis PT4 (strain P125109).